The primary structure comprises 197 residues: MKTPWKFLARLASRQPSGKTQESSAGNDTGSKTLEHTSALPPSPTVAASPLARNEDVSVDQGPIASDKPAGHNGVAQALEPPIHADEAQTTARDEADQSGAEANSLAPKSTASTKSQRKPRIKRRERGKRANARVDAQSAVVQKHYQNLQQSSSRDLFFHELATLDEEIKMLRTQLAQKLHLQNVQLKKMLERFELS.

The interval 1–135 (MKTPWKFLAR…ERGKRANARV (135 aa)) is disordered. The segment covering 14-32 (RQPSGKTQESSAGNDTGSK) has biased composition (polar residues). Positions 83 to 96 (IHADEAQTTARDEA) are enriched in basic and acidic residues. Residues 116 to 132 (SQRKPRIKRRERGKRAN) show a composition bias toward basic residues.

It to Rhizobium NGR234A y4nF and y4aO.

This is an uncharacterized protein from Rhizobium meliloti (strain 1021) (Ensifer meliloti).